The following is a 196-amino-acid chain: Charged multivesicular body protein 1a (196 aa).

Methionine 1 bears the N-acetylmethionine mark. Residues 5–47 are a coiled coil; the sequence is LFQLKFTAKQLEKLAKKAEKDSKAEQAKVKKALLQKNVECARV. Serine 101 is subject to Phosphoserine. A coiled-coil region spans residues 102–124; the sequence is TMDLQKVSSVMDRFEQQVQNLDV. Serine 173 bears the Phosphoserine mark. The disordered stretch occupies residues 173-196; it reads SAVGESSVRSQEDQLSRRLAALRN. Positions 185–195 match the MIT-interacting motif motif; sequence DQLSRRLAALR.

It belongs to the SNF7 family. As to quaternary structure, probable peripherally associated component of the endosomal sorting required for transport complex III (ESCRT-III). ESCRT-III components are thought to multimerize to form a flat lattice on the perimeter membrane of the endosome. Several assembly forms of ESCRT-III may exist that interact and act sequentially. Self-associates. Interacts with CHMP1B. Interacts with VPS4A. Interacts with VPS4B. Interacts with PHF1. Interacts with IST1. Interacts with MITD1. In terms of tissue distribution, expressed in placenta, cultured skin fibroblasts and in osteoblast cell line MG-63.

The protein resides in the cytoplasm. It is found in the endosome membrane. It localises to the nucleus matrix. Probable peripherally associated component of the endosomal sorting required for transport complex III (ESCRT-III) which is involved in multivesicular bodies (MVBs) formation and sorting of endosomal cargo proteins into MVBs. MVBs contain intraluminal vesicles (ILVs) that are generated by invagination and scission from the limiting membrane of the endosome and mostly are delivered to lysosomes enabling degradation of membrane proteins, such as stimulated growth factor receptors, lysosomal enzymes and lipids. The MVB pathway appears to require the sequential function of ESCRT-O, -I,-II and -III complexes. ESCRT-III proteins mostly dissociate from the invaginating membrane before the ILV is released. The ESCRT machinery also functions in topologically equivalent membrane fission events, such as the terminal stages of cytokinesis and the budding of enveloped viruses (HIV-1 and other lentiviruses). ESCRT-III proteins are believed to mediate the necessary vesicle extrusion and/or membrane fission activities, possibly in conjunction with the AAA ATPase VPS4. Involved in cytokinesis. Involved in recruiting VPS4A and/or VPS4B to the midbody of dividing cells. May also be involved in chromosome condensation. Targets the Polycomb group (PcG) protein BMI1/PCGF4 to regions of condensed chromatin. May play a role in stable cell cycle progression and in PcG gene silencing. The polypeptide is Charged multivesicular body protein 1a (CHMP1A) (Homo sapiens (Human)).